Consider the following 218-residue polypeptide: Ras-related protein Rab-4A (218 aa).

Positions 23, 24, 25, 26, 27, 28, 42, 44, and 45 each coordinate GTP. S27 contributes to the Mg(2+) binding site. The short motif at H44–E49 is the Switch 1 element. Mg(2+) is bound by residues T45 and D68. Positions A70 to T79 match the Switch 2 motif. G71 lines the GTP pocket. Position 72 is a 5-glutamyl serotonin (Q72). Residues N126, K127, D129, A157, and L158 each coordinate GTP. S190 carries the phosphoserine modification. At S204 the chain carries Phosphoserine; by CDK1. Residues C216 and C218 are each lipidated (S-geranylgeranyl cysteine). C218 carries the post-translational modification Cysteine methyl ester.

The protein belongs to the small GTPase superfamily. Rab family. Interacts with SGSM1, SGSM2 and SGSM3. Interacts with RAB11FIP1, RABEP1, ZFYVE20 and RUFY1. Interacts (membrane-bound form) with NDRG1; the interaction involves NDRG1 in vesicular recycling of E-cadherin. Interacts (in GTP-bound form) with GRIPAP1 (via N-terminus). Interacts with RABEP1 and RBSN. Does not interact with HPS4. Does not interact with HPS4. Interacts with RABEP2; this interaction may mediate VEGFR2 cell surface expression. It depends on Mg(2+) as a cofactor. Serotonylation of Gln-72 by TGM2 during activation and aggregation of platelets leads to constitutive activation of GTPase activity. In terms of processing, phosphorylated by CDK1 kinase during mitosis. Expressed in the central nervous system, including cortex, cerebellum, midbrain and spinal cord, and in the kidney, lung, liver and spleen.

The protein localises to the membrane. Its subcellular location is the cytoplasm. It localises to the early endosome membrane. The protein resides in the recycling endosome membrane. It carries out the reaction GTP + H2O = GDP + phosphate + H(+). With respect to regulation, regulated by guanine nucleotide exchange factors (GEFs) which promote the exchange of bound GDP for free GTP. Regulated by GTPase activating proteins (GAPs) which increase the GTP hydrolysis activity. Inhibited by GDP dissociation inhibitors (GDIs). The small GTPases Rab are key regulators of intracellular membrane trafficking, from the formation of transport vesicles to their fusion with membranes. Rabs cycle between an inactive GDP-bound form and an active GTP-bound form that is able to recruit to membranes different sets of downstream effectors directly responsible for vesicle formation, movement, tethering and fusion. RAB4A is involved in protein transport. Also plays a role in vesicular traffic. Mediates VEGFR2 endosomal trafficking to enhance VEGFR2 signaling. Acts as a regulator of platelet alpha-granule release during activation and aggregation of platelets. In Mus musculus (Mouse), this protein is Ras-related protein Rab-4A.